Reading from the N-terminus, the 748-residue chain is Bifunctional lysine-specific demethylase and histidyl-hydroxylase NO66 (748 aa).

2 disordered regions span residues 65-135 and 160-264; these read NIDR…RSTY and TEVV…DDEG. Residues 94-110 show a composition bias toward basic and acidic residues; it reads LENKKPKVEVKKEDEKS. A compositionally biased stretch (polar residues) spans 124-134; the sequence is LVQNETSTRST. The span at 163–193 shows a compositional bias: acidic residues; it reads VESDDEQMIGLDSDEELEDEDETDIDEDEMM. Basic and acidic residues predominate over residues 194 to 203; it reads IDPKDIERYI. Residues 207-264 are compositionally biased toward acidic residues; it reads SVEDEEDMEDEEIEDEEFEDEEFEDEEEEADEQEEEEEDVSDEESVVSEMDADSDDEG. Positions 399–543 constitute a JmjC domain; that stretch reads QLVNPQTYDD…NLMEKVVPEA (145 aa). Fe cation is bound by residues histidine 442, aspartate 444, and histidine 509.

This sequence belongs to the ROX family. NO66 subfamily. Fe(2+) is required as a cofactor.

Its subcellular location is the nucleus. The enzyme catalyses N(6),N(6)-dimethyl-L-lysyl(36)-[histone H3] + 2 2-oxoglutarate + 2 O2 = L-lysyl(36)-[histone H3] + 2 formaldehyde + 2 succinate + 2 CO2. Functionally, oxygenase that can act as both a histone lysine demethylase and a ribosomal histidine hydroxylase. Specifically demethylates 'Lys-4' (H3K4me) and 'Lys-36' (H3K36me) of histone H3, thereby playing a central role in histone code. Mediates response to multiple stress stimuli, including heat shock and osmotic, oxidative, and ethanol stress. The polypeptide is Bifunctional lysine-specific demethylase and histidyl-hydroxylase NO66 (jmjc-1) (Caenorhabditis elegans).